Reading from the N-terminus, the 449-residue chain is Phosphoglucosamine mutase (449 aa).

Ser102 serves as the catalytic Phosphoserine intermediate. Mg(2+) contacts are provided by Ser102, Asp241, Asp243, and Asp245. Ser102 carries the phosphoserine modification.

Belongs to the phosphohexose mutase family. Requires Mg(2+) as cofactor. In terms of processing, activated by phosphorylation.

The enzyme catalyses alpha-D-glucosamine 1-phosphate = D-glucosamine 6-phosphate. Its function is as follows. Catalyzes the conversion of glucosamine-6-phosphate to glucosamine-1-phosphate. In Pseudoalteromonas translucida (strain TAC 125), this protein is Phosphoglucosamine mutase.